The sequence spans 526 residues: Fumitremorgin C synthase (526 aa).

A helical transmembrane segment spans residues 4-24 (LPLSPAVLFLTITLPILYFWI). C443 is a binding site for heme.

The protein belongs to the cytochrome P450 family. Heme serves as cofactor.

It is found in the membrane. It carries out the reaction tryprostatin A + reduced [NADPH--hemoprotein reductase] + O2 = fumitremorgin C + oxidized [NADPH--hemoprotein reductase] + 2 H2O + H(+). It functions in the pathway mycotoxin biosynthesis. Functionally, cytochrome P450 monooxygenase; part of the gene cluster that mediates the biosynthesis of fumitremorgins, indole alkaloids that carry not only intriguing chemical structures, but also interesting biological and pharmacological activities. The biosynthesis of fumitremorgin-type alkaloids begins by condensation of the two amino acids L-tryptophan and L-proline to brevianamide F, catalyzed by the non-ribosomal peptide synthetase ftmPS/ftmA. Brevianamide F is then prenylated by the prenyltransferase ftmPT1/ftmB in the presence of dimethylallyl diphosphate, resulting in the formation of tryprostatin B. The three cytochrome P450 monooxygenases, ftmP450-1/ftmC, ftmP450-2/ftmE and ftmP450-3/FtmG, are responsible for the conversion of tryprostatin B to 6-hydroxytryprostatin B, tryprostatin A to fumitremorgin C and fumitremorgin C to 12,13-dihydroxyfumitremorgin C, respectively. The putative methyltransferase ftmMT/ftmD is expected for the conversion of 6-hydroxytryprostatin B to tryprostatin A. FtmPT2/FtmH catalyzes the prenylation of 12,13-dihydroxyfumitre-morgin C in the presence of dimethylallyl diphosphate, resulting in the formation of fumitremorgin B. Fumitremorgin B is further converted to verruculogen by ftmOx1/ftmF via the insertion of an endoperoxide bond between the two prenyl moieties. Finally, verruculogen is further converted to fumitremorgin A by the verruculogen prenyltransferase ftmPT3. This chain is Fumitremorgin C synthase, found in Neosartorya fischeri (strain ATCC 1020 / DSM 3700 / CBS 544.65 / FGSC A1164 / JCM 1740 / NRRL 181 / WB 181) (Aspergillus fischerianus).